The sequence spans 144 residues: Ethylene-responsive transcription factor ERF019 (144 aa).

Positions 13–72 (KYKGIRRRKWGKWVSEIRVPGTRDRLWLGSFSTAEGAAVAHDVAFFCLHQPDSLESLNFP) form a DNA-binding region, AP2/ERF.

Belongs to the AP2/ERF transcription factor family. ERF subfamily.

It localises to the nucleus. Probably acts as a transcriptional activator. Binds to the GCC-box pathogenesis-related promoter element. May be involved in the regulation of gene expression by stress factors and by components of stress signal transduction pathways. This Arabidopsis thaliana (Mouse-ear cress) protein is Ethylene-responsive transcription factor ERF019 (ERF019).